The chain runs to 428 residues: Stromal membrane-associated protein 2 (428 aa).

The Arf-GAP domain maps to 13-139; the sequence is QAVLGSLLSE…INTFRKEKDD (127 aa). The C4-type zinc finger occupies 28 to 51; it reads CADCQAKGPRWASWNIGVFICIRC. Positions 161 to 172 are enriched in basic and acidic residues; that stretch reads VKMPQKKEETQQ. Disordered stretches follow at residues 161 to 182 and 222 to 258; these read VKMP…KSTE and SRKV…AGKK.

As to quaternary structure, may interact with clathrin heavy chains.

Its function is as follows. GTPase activating protein. May play a role in clathrin-dependent retrograde transport from early endosomes to the trans-Golgi network. This chain is Stromal membrane-associated protein 2 (SMAP2), found in Gallus gallus (Chicken).